A 485-amino-acid polypeptide reads, in one-letter code: Glutamyl-tRNA(Gln) amidotransferase subunit A (485 aa).

Residues lysine 79 and serine 154 each act as charge relay system in the active site. Catalysis depends on serine 178, which acts as the Acyl-ester intermediate.

This sequence belongs to the amidase family. GatA subfamily. Heterotrimer of A, B and C subunits.

The catalysed reaction is L-glutamyl-tRNA(Gln) + L-glutamine + ATP + H2O = L-glutaminyl-tRNA(Gln) + L-glutamate + ADP + phosphate + H(+). Allows the formation of correctly charged Gln-tRNA(Gln) through the transamidation of misacylated Glu-tRNA(Gln) in organisms which lack glutaminyl-tRNA synthetase. The reaction takes place in the presence of glutamine and ATP through an activated gamma-phospho-Glu-tRNA(Gln). The chain is Glutamyl-tRNA(Gln) amidotransferase subunit A from Bacillus velezensis (strain DSM 23117 / BGSC 10A6 / LMG 26770 / FZB42) (Bacillus amyloliquefaciens subsp. plantarum).